The following is a 394-amino-acid chain: NAD(P)H-quinone oxidoreductase subunit H 2 (394 aa).

It belongs to the complex I 49 kDa subunit family. As to quaternary structure, NDH-1 can be composed of about 15 different subunits; different subcomplexes with different compositions have been identified which probably have different functions.

The protein localises to the cell inner membrane. The catalysed reaction is a plastoquinone + NADH + (n+1) H(+)(in) = a plastoquinol + NAD(+) + n H(+)(out). It carries out the reaction a plastoquinone + NADPH + (n+1) H(+)(in) = a plastoquinol + NADP(+) + n H(+)(out). Functionally, NDH-1 shuttles electrons from an unknown electron donor, via FMN and iron-sulfur (Fe-S) centers, to quinones in the respiratory and/or the photosynthetic chain. The immediate electron acceptor for the enzyme in this species is believed to be plastoquinone. Couples the redox reaction to proton translocation, and thus conserves the redox energy in a proton gradient. Cyanobacterial NDH-1 also plays a role in inorganic carbon-concentration. This is NAD(P)H-quinone oxidoreductase subunit H 2 from Gloeobacter violaceus (strain ATCC 29082 / PCC 7421).